The primary structure comprises 141 residues: MIINKVPKAHFDPVSDLFTKINNARKAKLLTVTTIASKLKIAILEILIKEGYLANYQVLENKTKTKKLVSFTLKYTQRRICSINGVKQISKPGLRIYRSFEKLPLVLNGLGIAIISTSDGVMTDKVARLKKIGGEILAYVW.

Belongs to the universal ribosomal protein uS8 family. In terms of assembly, part of the 30S ribosomal subunit. Contacts proteins S5 and S12.

Its function is as follows. One of the primary rRNA binding proteins, it binds directly to 16S rRNA central domain where it helps coordinate assembly of the platform of the 30S subunit. This is Small ribosomal subunit protein uS8 from Mycoplasma genitalium (strain ATCC 33530 / DSM 19775 / NCTC 10195 / G37) (Mycoplasmoides genitalium).